We begin with the raw amino-acid sequence, 66 residues long: Prokaryotic ubiquitin-like protein UBact (66 aa).

The interval 1-66 is disordered; it reads MNMRYTLMPE…AERYRQRTGE (66 aa). The segment covering 30-66 has biased composition (basic and acidic residues); that stretch reads GGPRRPETGSPDKDNLLKRMRKVDPKQAERYRQRTGE. Glutamate 66 participates in a covalent cross-link: Isoglutamyl lysine isopeptide (Glu-Lys) (interchain with K-? in acceptor proteins).

It belongs to the ubiquitin-like protein UBact family.

Functionally, may function as a protein modifier covalently attached to lysine residues of substrate proteins. This may serve to target the modified proteins for degradation by proteasomes. The polypeptide is Prokaryotic ubiquitin-like protein UBact (Nitrospira moscoviensis).